Here is a 491-residue protein sequence, read N- to C-terminus: GTPase Der (491 aa).

An EngA-type G 1 domain is found at 3-178 (AKIALVGRPN…EMRDLLPEED (176 aa)). GTP is bound by residues 9–16 (GRPNVGKS), 57–61 (DTGGI), and 130–133 (NKVD). The span at 198-224 (DAETEDGASASETEEDITEETVEDEPE) shows a compositional bias: acidic residues. Residues 198–225 (DAETEDGASASETEEDITEETVEDEPEA) are disordered. The EngA-type G 2 domain occupies 227–400 (LRLCMLGRPN…LAARIRRECS (174 aa)). Residues 233–240 (GRPNAGKS), 280–284 (DTAGV), and 345–348 (NKMD) each bind GTP. One can recognise a KH-like domain in the interval 401–485 (VRIPTGQLNR…PMRVHFRSSH (85 aa)).

This sequence belongs to the TRAFAC class TrmE-Era-EngA-EngB-Septin-like GTPase superfamily. EngA (Der) GTPase family. In terms of assembly, associates with the 50S ribosomal subunit.

Its function is as follows. GTPase that plays an essential role in the late steps of ribosome biogenesis. This is GTPase Der from Nitratidesulfovibrio vulgaris (strain ATCC 29579 / DSM 644 / CCUG 34227 / NCIMB 8303 / VKM B-1760 / Hildenborough) (Desulfovibrio vulgaris).